Consider the following 161-residue polypeptide: 2-C-methyl-D-erythritol 2,4-cyclodiphosphate synthase (161 aa).

Residues Asp10 and His12 each coordinate a divalent metal cation. Residues 10-12 and 36-37 each bind 4-CDP-2-C-methyl-D-erythritol 2-phosphate; these read DVH and HS. His44 lines the a divalent metal cation pocket. Residues 58–60, 63–67, 102–108, 134–137, Phe141, and Arg144 contribute to the 4-CDP-2-C-methyl-D-erythritol 2-phosphate site; these read DIG, FPDTD, AQAPKMA, and TTTE.

The protein belongs to the IspF family. As to quaternary structure, homotrimer. It depends on a divalent metal cation as a cofactor.

It catalyses the reaction 4-CDP-2-C-methyl-D-erythritol 2-phosphate = 2-C-methyl-D-erythritol 2,4-cyclic diphosphate + CMP. It functions in the pathway isoprenoid biosynthesis; isopentenyl diphosphate biosynthesis via DXP pathway; isopentenyl diphosphate from 1-deoxy-D-xylulose 5-phosphate: step 4/6. In terms of biological role, involved in the biosynthesis of isopentenyl diphosphate (IPP) and dimethylallyl diphosphate (DMAPP), two major building blocks of isoprenoid compounds. Catalyzes the conversion of 4-diphosphocytidyl-2-C-methyl-D-erythritol 2-phosphate (CDP-ME2P) to 2-C-methyl-D-erythritol 2,4-cyclodiphosphate (ME-CPP) with a corresponding release of cytidine 5-monophosphate (CMP). In Shewanella sediminis (strain HAW-EB3), this protein is 2-C-methyl-D-erythritol 2,4-cyclodiphosphate synthase.